Reading from the N-terminus, the 62-residue chain is Photosystem II reaction center protein Z (62 aa).

The next 2 membrane-spanning stretches (helical) occupy residues Ala-8–Ala-28 and Phe-41–Ile-61.

It belongs to the PsbZ family. PSII is composed of 1 copy each of membrane proteins PsbA, PsbB, PsbC, PsbD, PsbE, PsbF, PsbH, PsbI, PsbJ, PsbK, PsbL, PsbM, PsbT, PsbY, PsbZ, Psb30/Ycf12, at least 3 peripheral proteins of the oxygen-evolving complex and a large number of cofactors. It forms dimeric complexes.

The protein localises to the plastid. Its subcellular location is the chloroplast thylakoid membrane. Functionally, may control the interaction of photosystem II (PSII) cores with the light-harvesting antenna, regulates electron flow through the 2 photosystem reaction centers. PSII is a light-driven water plastoquinone oxidoreductase, using light energy to abstract electrons from H(2)O, generating a proton gradient subsequently used for ATP formation. The chain is Photosystem II reaction center protein Z from Pelargonium hortorum (Common geranium).